The sequence spans 297 residues: HTH-type transcriptional regulator ArgP (297 aa).

The HTH lysR-type domain maps to 4 to 60 (PDYRTLQALDAVIRERGFERAAQKLCITQSAVSQRIKQLENMFGQPLLVRTVPPRPT). A DNA-binding region (H-T-H motif) is located at residues 21–40 (FERAAQKLCITQSAVSQRIK).

This sequence belongs to the LysR transcriptional regulatory family. In terms of assembly, homodimer.

Functionally, controls the transcription of genes involved in arginine and lysine metabolism. This chain is HTH-type transcriptional regulator ArgP, found in Salmonella typhi.